The sequence spans 385 residues: Lipid-A-disaccharide synthase (385 aa).

It belongs to the LpxB family.

It carries out the reaction a lipid X + a UDP-2-N,3-O-bis[(3R)-3-hydroxyacyl]-alpha-D-glucosamine = a lipid A disaccharide + UDP + H(+). It functions in the pathway bacterial outer membrane biogenesis; LPS lipid A biosynthesis. Functionally, condensation of UDP-2,3-diacylglucosamine and 2,3-diacylglucosamine-1-phosphate to form lipid A disaccharide, a precursor of lipid A, a phosphorylated glycolipid that anchors the lipopolysaccharide to the outer membrane of the cell. The protein is Lipid-A-disaccharide synthase of Pseudoalteromonas translucida (strain TAC 125).